The primary structure comprises 409 residues: Histidinol dehydrogenase homolog (409 aa).

Belongs to the histidinol dehydrogenase family.

The protein is Histidinol dehydrogenase homolog of Synechocystis sp. (strain ATCC 27184 / PCC 6803 / Kazusa).